Reading from the N-terminus, the 423-residue chain is Innexin eat-5 (423 aa).

4 consecutive transmembrane segments (helical) span residues 25 to 41 (YYYS…TITA), 102 to 122 (PFIM…WSML), 277 to 297 (IFLF…FDSI), and 341 to 361 (HSIL…IILL).

This sequence belongs to the pannexin family. In terms of assembly, heterooligomer of eat-5 and another innexin. In terms of tissue distribution, expressed in pharyngeal muscles.

It is found in the cell membrane. The protein localises to the cell junction. The protein resides in the gap junction. In terms of biological role, structural component of the gap junctions. Required for synchronized pharyngeal muscle contractions. This is Innexin eat-5 (eat-5) from Caenorhabditis elegans.